The following is a 61-amino-acid chain: Temporin-ALj (61 aa).

A signal peptide spans 1-22 (MFTLKKSLLLLFFLATINLSFC). A propeptide spanning residues 23 to 46 (EQERNAEEERRDEPDERNAEVEKR) is cleaved from the precursor. Leu59 carries the post-translational modification Leucine amide.

It belongs to the frog skin active peptide (FSAP) family. Temporin subfamily. In terms of tissue distribution, expressed by the skin glands.

The protein localises to the secreted. Functionally, antimicrobial peptide with activity against Gram-positive and Gram-negative bacteria and against fungi. Has been tested against S.aureus (MIC=7.5 ug/mL), B.pumilus (MIC=15.0 ug/mL), B.cereus (MIC=75.0 ug/mL), E.coli (MIC=15.0 ug/mL), B.dysenteriae (MIC=30.0 ug/mL), A.cacoaceticus (MIC=60.0 ug/mL), P.aeruginosa (MIC=7.5 ug/mL) and C.albicans (MIC=5.0 ug/mL). Also shows a weak hemolytic activity. The protein is Temporin-ALj of Amolops loloensis (Lolokou Sucker Frog).